Here is a 335-residue protein sequence, read N- to C-terminus: 4-hydroxy-3-methylbut-2-enyl diphosphate reductase (335 aa).

Cys14 contributes to the [4Fe-4S] cluster binding site. (2E)-4-hydroxy-3-methylbut-2-enyl diphosphate-binding residues include His43 and His81. Dimethylallyl diphosphate-binding residues include His43 and His81. Residues His43 and His81 each coordinate isopentenyl diphosphate. Cys103 contributes to the [4Fe-4S] cluster binding site. Residue His132 participates in (2E)-4-hydroxy-3-methylbut-2-enyl diphosphate binding. Residue His132 participates in dimethylallyl diphosphate binding. Isopentenyl diphosphate is bound at residue His132. The Proton donor role is filled by Glu134. Thr179 is a binding site for (2E)-4-hydroxy-3-methylbut-2-enyl diphosphate. Cys209 lines the [4Fe-4S] cluster pocket. (2E)-4-hydroxy-3-methylbut-2-enyl diphosphate contacts are provided by Ser237, Ser238, Asn239, and Ser285. Dimethylallyl diphosphate is bound by residues Ser237, Ser238, Asn239, and Ser285. 4 residues coordinate isopentenyl diphosphate: Ser237, Ser238, Asn239, and Ser285.

This sequence belongs to the IspH family. [4Fe-4S] cluster serves as cofactor.

The enzyme catalyses isopentenyl diphosphate + 2 oxidized [2Fe-2S]-[ferredoxin] + H2O = (2E)-4-hydroxy-3-methylbut-2-enyl diphosphate + 2 reduced [2Fe-2S]-[ferredoxin] + 2 H(+). The catalysed reaction is dimethylallyl diphosphate + 2 oxidized [2Fe-2S]-[ferredoxin] + H2O = (2E)-4-hydroxy-3-methylbut-2-enyl diphosphate + 2 reduced [2Fe-2S]-[ferredoxin] + 2 H(+). It participates in isoprenoid biosynthesis; dimethylallyl diphosphate biosynthesis; dimethylallyl diphosphate from (2E)-4-hydroxy-3-methylbutenyl diphosphate: step 1/1. The protein operates within isoprenoid biosynthesis; isopentenyl diphosphate biosynthesis via DXP pathway; isopentenyl diphosphate from 1-deoxy-D-xylulose 5-phosphate: step 6/6. Its function is as follows. Catalyzes the conversion of 1-hydroxy-2-methyl-2-(E)-butenyl 4-diphosphate (HMBPP) into a mixture of isopentenyl diphosphate (IPP) and dimethylallyl diphosphate (DMAPP). Acts in the terminal step of the DOXP/MEP pathway for isoprenoid precursor biosynthesis. The polypeptide is 4-hydroxy-3-methylbut-2-enyl diphosphate reductase (Deinococcus radiodurans (strain ATCC 13939 / DSM 20539 / JCM 16871 / CCUG 27074 / LMG 4051 / NBRC 15346 / NCIMB 9279 / VKM B-1422 / R1)).